A 270-amino-acid polypeptide reads, in one-letter code: Putative ABC transporter ATP-binding protein MG304 (270 aa).

Residues 1–232 (MLQVKNLSFK…LDLFHNHHFN (232 aa)) form the ABC transporter domain. 36-43 (GHNGSGKS) contributes to the ATP binding site.

The protein belongs to the ABC transporter superfamily.

The sequence is that of Putative ABC transporter ATP-binding protein MG304 from Mycoplasma genitalium (strain ATCC 33530 / DSM 19775 / NCTC 10195 / G37) (Mycoplasmoides genitalium).